Reading from the N-terminus, the 67-residue chain is UPF0337 protein CC_0938 (67 aa).

A disordered region spans residues 37–67 (AAQKAKGDLQNKVGKAQDKARRRDQALNARL). Over residues 41 to 61 (AKGDLQNKVGKAQDKARRRDQ) the composition is skewed to basic and acidic residues.

It belongs to the UPF0337 (CsbD) family.

This is UPF0337 protein CC_0938 from Caulobacter vibrioides (strain ATCC 19089 / CIP 103742 / CB 15) (Caulobacter crescentus).